We begin with the raw amino-acid sequence, 220 residues long: Small ribosomal subunit protein uS3 (220 aa).

One can recognise a KH type-2 domain in the interval 43–111 (IRSYLTKTLD…QVQLNILEVK (69 aa)).

Belongs to the universal ribosomal protein uS3 family. As to quaternary structure, part of the 30S ribosomal subunit. Forms a tight complex with proteins S10 and S14.

Functionally, binds the lower part of the 30S subunit head. Binds mRNA in the 70S ribosome, positioning it for translation. This chain is Small ribosomal subunit protein uS3, found in Tropheryma whipplei (strain TW08/27) (Whipple's bacillus).